Reading from the N-terminus, the 56-residue chain is Small ribosomal subunit protein uS14 (56 aa).

Cys-21, Cys-24, Cys-39, and Cys-42 together coordinate Zn(2+).

The protein belongs to the universal ribosomal protein uS14 family. In terms of assembly, component of the 40S small ribosomal subunit. The cofactor is Zn(2+).

It is found in the cytoplasm. The protein localises to the cytosol. It localises to the rough endoplasmic reticulum. The polypeptide is Small ribosomal subunit protein uS14 (RpS29) (Drosophila melanogaster (Fruit fly)).